A 429-amino-acid polypeptide reads, in one-letter code: uncharacterized protein (429 aa).

The next 10 helical transmembrane spans lie at 26–46 (VALTGAAAVVVLPVITSHDIF), 51–71 (TGIDWDVIFLLVGMMIIVGVL), 99–119 (LVLVSALASALLDNVTTVLLI), 135–155 (TSFLMAEVFASNIGGAATLVG), 173–193 (FMLHLTPLVVIVLIALIAVLP), 223–243 (LLVKCGAVLVLVFAAFVAHPV), 278–298 (TLLFFAGLFIMVGALVKTGVV), 311–331 (GNIVATAFLILGVSAPISGII), 361–381 (WWALALGADFGGNLTAIGASA), and 407–427 (VVTAVSIALAAIYLWLRYFVL).

The protein belongs to the CitM (TC 2.A.11) transporter family.

The protein resides in the cell membrane. This is an uncharacterized protein from Mycobacterium tuberculosis (strain ATCC 25618 / H37Rv).